Consider the following 197-residue polypeptide: Ubiquitin-conjugating enzyme E2 T (197 aa).

One can recognise a UBC core domain in the interval 2–152 (QRASRLKREL…ARQWTEKHAR (151 aa)). Catalysis depends on C86, which acts as the Glycyl thioester intermediate. Glycyl lysine isopeptide (Lys-Gly) (interchain with G-Cter in ubiquitin) cross-links involve residues K91 and K182. Residues 149–197 (KHARQKQKADEEEMLDNLPEAGDSRVHNSTQKRKASQLVGIEKKFHPDV) form a disordered region. S184 carries the post-translational modification Phosphoserine. Glycyl lysine isopeptide (Lys-Gly) (interchain with G-Cter in SUMO2) cross-links involve residues K191 and K192.

The protein belongs to the ubiquitin-conjugating enzyme family. In terms of assembly, directly interacts with FANCL. Interacts with BRCA1. Post-translationally, auto-ubiquitinated. Effects of auto-monoubiquitination at Lys-91 and Lys-182 are unclear: according to a report, monoubiquitination inactivates E2 enzyme activity. In contrast, according to another report, autoubiquitination does not affect E2 enzyme activity.

It is found in the nucleus. The catalysed reaction is S-ubiquitinyl-[E1 ubiquitin-activating enzyme]-L-cysteine + [E2 ubiquitin-conjugating enzyme]-L-cysteine = [E1 ubiquitin-activating enzyme]-L-cysteine + S-ubiquitinyl-[E2 ubiquitin-conjugating enzyme]-L-cysteine.. It participates in protein modification; protein ubiquitination. In terms of biological role, accepts ubiquitin from the E1 complex and catalyzes its covalent attachment to other proteins. Catalyzes monoubiquitination. Involved in mitomycin-C (MMC)-induced DNA repair. Acts as a specific E2 ubiquitin-conjugating enzyme for the Fanconi anemia complex by associating with E3 ubiquitin-protein ligase FANCL and catalyzing monoubiquitination of FANCD2, a key step in the DNA damage pathway. Also mediates monoubiquitination of FANCL and FANCI. May contribute to ubiquitination and degradation of BRCA1. In vitro able to promote polyubiquitination using all 7 ubiquitin Lys residues, but may prefer 'Lys-11'-, 'Lys-27'-, 'Lys-48'- and 'Lys-63'-linked polyubiquitination. This chain is Ubiquitin-conjugating enzyme E2 T (UBE2T), found in Homo sapiens (Human).